The sequence spans 156 residues: Small ribosomal subunit protein uS7 (156 aa).

Belongs to the universal ribosomal protein uS7 family. In terms of assembly, part of the 30S ribosomal subunit. Contacts proteins S9 and S11.

In terms of biological role, one of the primary rRNA binding proteins, it binds directly to 16S rRNA where it nucleates assembly of the head domain of the 30S subunit. Is located at the subunit interface close to the decoding center, probably blocks exit of the E-site tRNA. The protein is Small ribosomal subunit protein uS7 of Microcystis aeruginosa (strain NIES-843 / IAM M-2473).